A 194-amino-acid polypeptide reads, in one-letter code: dCTP deaminase (194 aa).

DCTP contacts are provided by residues 110–115 (RSSLAR), D128, 136–138 (VLE), Y171, K178, and Q182. E138 (proton donor/acceptor) is an active-site residue.

This sequence belongs to the dCTP deaminase family. In terms of assembly, homotrimer.

The catalysed reaction is dCTP + H2O + H(+) = dUTP + NH4(+). It participates in pyrimidine metabolism; dUMP biosynthesis; dUMP from dCTP (dUTP route): step 1/2. Catalyzes the deamination of dCTP to dUTP. The sequence is that of dCTP deaminase from Haemophilus ducreyi (strain 35000HP / ATCC 700724).